The primary structure comprises 130 residues: ESAT-6 secretion system extracellular protein C (130 aa).

Belongs to the EsxC family.

It is found in the secreted. The sequence is that of ESAT-6 secretion system extracellular protein C from Staphylococcus aureus (strain MSSA476).